The following is a 60-amino-acid chain: Large ribosomal subunit protein uL30 (60 aa).

The protein belongs to the universal ribosomal protein uL30 family. As to quaternary structure, part of the 50S ribosomal subunit.

The sequence is that of Large ribosomal subunit protein uL30 from Bacillus pumilus (strain SAFR-032).